Here is a 359-residue protein sequence, read N- to C-terminus: Peptide chain release factor 1 (359 aa).

Gln235 carries the post-translational modification N5-methylglutamine. Residues 285–305 are disordered; that stretch reads KRDSEISQMRKSQIGSGDRSE. Residues 290–299 are compositionally biased toward polar residues; sequence ISQMRKSQIG.

The protein belongs to the prokaryotic/mitochondrial release factor family. Post-translationally, methylated by PrmC. Methylation increases the termination efficiency of RF1.

It is found in the cytoplasm. Its function is as follows. Peptide chain release factor 1 directs the termination of translation in response to the peptide chain termination codons UAG and UAA. This is Peptide chain release factor 1 from Ehrlichia canis (strain Jake).